Here is a 1155-residue protein sequence, read N- to C-terminus: DNA-directed RNA polymerase subunit beta (1155 aa).

The protein belongs to the RNA polymerase beta chain family. The RNAP catalytic core consists of 2 alpha, 1 beta, 1 beta' and 1 omega subunit. When a sigma factor is associated with the core the holoenzyme is formed, which can initiate transcription.

The enzyme catalyses RNA(n) + a ribonucleoside 5'-triphosphate = RNA(n+1) + diphosphate. DNA-dependent RNA polymerase catalyzes the transcription of DNA into RNA using the four ribonucleoside triphosphates as substrates. The chain is DNA-directed RNA polymerase subunit beta from Borreliella burgdorferi (strain ZS7) (Borrelia burgdorferi).